Consider the following 137-residue polypeptide: ATP synthase epsilon chain (137 aa).

The protein belongs to the ATPase epsilon chain family. As to quaternary structure, F-type ATPases have 2 components, CF(1) - the catalytic core - and CF(0) - the membrane proton channel. CF(1) has five subunits: alpha(3), beta(3), gamma(1), delta(1), epsilon(1). CF(0) has three main subunits: a, b and c.

Its subcellular location is the cell membrane. Functionally, produces ATP from ADP in the presence of a proton gradient across the membrane. In Streptococcus agalactiae serotype III (strain NEM316), this protein is ATP synthase epsilon chain.